Consider the following 181-residue polypeptide: Large ribosomal subunit protein uL5 (181 aa).

Belongs to the universal ribosomal protein uL5 family. As to quaternary structure, part of the 50S ribosomal subunit; part of the 5S rRNA/L5/L18/L25 subcomplex. Contacts the 5S rRNA and the P site tRNA. Forms a bridge to the 30S subunit in the 70S ribosome.

Functionally, this is one of the proteins that bind and probably mediate the attachment of the 5S RNA into the large ribosomal subunit, where it forms part of the central protuberance. In the 70S ribosome it contacts protein S13 of the 30S subunit (bridge B1b), connecting the 2 subunits; this bridge is implicated in subunit movement. Contacts the P site tRNA; the 5S rRNA and some of its associated proteins might help stabilize positioning of ribosome-bound tRNAs. The polypeptide is Large ribosomal subunit protein uL5 (Helicobacter hepaticus (strain ATCC 51449 / 3B1)).